The sequence spans 218 residues: Small ribosomal subunit protein uS5 (218 aa).

The region spanning 66-129 (LKQELLNVNL…REAKLNLVPV (64 aa)) is the S5 DRBM domain.

This sequence belongs to the universal ribosomal protein uS5 family. In terms of assembly, part of the 30S ribosomal subunit. Contacts protein S4.

With S4 and S12 plays an important role in translational accuracy. In Pyrobaculum aerophilum (strain ATCC 51768 / DSM 7523 / JCM 9630 / CIP 104966 / NBRC 100827 / IM2), this protein is Small ribosomal subunit protein uS5.